The sequence spans 272 residues: uncharacterized protein (272 aa).

Active-site residues include Asp-71 and Glu-163.

It belongs to the glycosyl hydrolase 25 family.

This is an uncharacterized protein from Escherichia coli (strain K12).